A 374-amino-acid chain; its full sequence is Dual-specificity RNA methyltransferase RlmN (374 aa).

Residue Glu-94 is the Proton acceptor of the active site. Positions 100–339 constitute a Radical SAM core domain; sequence EEDRATLCVS…VTIRKTRGDD (240 aa). Cys-107 and Cys-344 form a disulfide bridge. Positions 114, 118, and 121 each coordinate [4Fe-4S] cluster. Residues 168 to 169, Ser-200, 222 to 224, and Asn-301 each bind S-adenosyl-L-methionine; these read GE and SLH. The active-site S-methylcysteine intermediate is Cys-344.

This sequence belongs to the radical SAM superfamily. RlmN family. [4Fe-4S] cluster serves as cofactor.

The protein localises to the cytoplasm. It carries out the reaction adenosine(2503) in 23S rRNA + 2 reduced [2Fe-2S]-[ferredoxin] + 2 S-adenosyl-L-methionine = 2-methyladenosine(2503) in 23S rRNA + 5'-deoxyadenosine + L-methionine + 2 oxidized [2Fe-2S]-[ferredoxin] + S-adenosyl-L-homocysteine. The enzyme catalyses adenosine(37) in tRNA + 2 reduced [2Fe-2S]-[ferredoxin] + 2 S-adenosyl-L-methionine = 2-methyladenosine(37) in tRNA + 5'-deoxyadenosine + L-methionine + 2 oxidized [2Fe-2S]-[ferredoxin] + S-adenosyl-L-homocysteine. Specifically methylates position 2 of adenine 2503 in 23S rRNA and position 2 of adenine 37 in tRNAs. m2A2503 modification seems to play a crucial role in the proofreading step occurring at the peptidyl transferase center and thus would serve to optimize ribosomal fidelity. In Vibrio vulnificus (strain YJ016), this protein is Dual-specificity RNA methyltransferase RlmN.